We begin with the raw amino-acid sequence, 779 residues long: Phosphoribosylformylglycinamidine synthase subunit PurL (779 aa).

Histidine 52 is a catalytic residue. ATP contacts are provided by tyrosine 55 and lysine 94. Glutamate 96 is a binding site for Mg(2+). Residues 97–100 and arginine 119 each bind substrate; that span reads SHNH. The active-site Proton acceptor is the histidine 98. A Mg(2+)-binding site is contributed by aspartate 120. Glutamine 243 serves as a coordination point for substrate. Position 271 (aspartate 271) interacts with Mg(2+). 315 to 317 is a binding site for substrate; that stretch reads ESQ. ATP is bound by residues asparagine 523 and glycine 560. Asparagine 561 is a binding site for Mg(2+). Serine 563 is a binding site for substrate.

The protein belongs to the FGAMS family. Monomer. Part of the FGAM synthase complex composed of 1 PurL, 1 PurQ and 2 PurS subunits.

It localises to the cytoplasm. The catalysed reaction is N(2)-formyl-N(1)-(5-phospho-beta-D-ribosyl)glycinamide + L-glutamine + ATP + H2O = 2-formamido-N(1)-(5-O-phospho-beta-D-ribosyl)acetamidine + L-glutamate + ADP + phosphate + H(+). Its pathway is purine metabolism; IMP biosynthesis via de novo pathway; 5-amino-1-(5-phospho-D-ribosyl)imidazole from N(2)-formyl-N(1)-(5-phospho-D-ribosyl)glycinamide: step 1/2. Part of the phosphoribosylformylglycinamidine synthase complex involved in the purines biosynthetic pathway. Catalyzes the ATP-dependent conversion of formylglycinamide ribonucleotide (FGAR) and glutamine to yield formylglycinamidine ribonucleotide (FGAM) and glutamate. The FGAM synthase complex is composed of three subunits. PurQ produces an ammonia molecule by converting glutamine to glutamate. PurL transfers the ammonia molecule to FGAR to form FGAM in an ATP-dependent manner. PurS interacts with PurQ and PurL and is thought to assist in the transfer of the ammonia molecule from PurQ to PurL. This chain is Phosphoribosylformylglycinamidine synthase subunit PurL, found in Prochlorococcus marinus (strain MIT 9301).